Here is a 914-residue protein sequence, read N- to C-terminus: Beta-mannosidase A (914 aa).

Residues 1-20 form the signal peptide; the sequence is MRFTATAAALVASSIPATLG. N39, N79, N230, N265, N299, N309, and N330 each carry an N-linked (GlcNAc...) asparagine glycan. E462 functions as the Proton donor in the catalytic mechanism. 8 N-linked (GlcNAc...) asparagine glycosylation sites follow: N591, N614, N641, N721, N744, N773, N784, and N909.

The protein belongs to the glycosyl hydrolase 2 family. Beta-mannosidase A subfamily. Homodimer.

It localises to the secreted. The enzyme catalyses Hydrolysis of terminal, non-reducing beta-D-mannose residues in beta-D-mannosides.. The protein operates within glycan metabolism; N-glycan degradation. In terms of biological role, exoglycosidase that cleaves the single beta-linked mannose residue from the non-reducing end of beta-mannosidic oligosaccharides of various complexity and length. Involved in the degradation of polymeric mannan and galactomannan. The protein is Beta-mannosidase A (mndA) of Aspergillus flavus (strain ATCC 200026 / FGSC A1120 / IAM 13836 / NRRL 3357 / JCM 12722 / SRRC 167).